Here is a 301-residue protein sequence, read N- to C-terminus: MFELIFLGTSASVPSHDRNHPGLLVQAGGQRILVDCGEGIQRQLLASGAGFRRLDRILLTHGHLDHVLGIPGLFSTLRLRRSADVMSVHGSPGTIDVVIRMLAGLWGDGRAPIPLELVPLTPGQVLDAGAFTINCFAVRHRDTDSFGFEFVSPARRHLLPERLAALAVPDGPIRKTLADGYPVTLDDGRIVTPEDVLGTPGGGKKLVIVGDTETTDGLQAHVRGADLLVIEATFLQRDSATARDYGHLTAAEAAALAASGNVGQLVLNHISGRYPDEEILAEARSIFPATRIASDFDRLTV.

Residues His-61, His-63, Asp-65, His-66, His-140, Asp-211, and His-269 each coordinate Zn(2+). Catalysis depends on Asp-65, which acts as the Proton acceptor.

It belongs to the RNase Z family. As to quaternary structure, homodimer. Zn(2+) is required as a cofactor.

It catalyses the reaction Endonucleolytic cleavage of RNA, removing extra 3' nucleotides from tRNA precursor, generating 3' termini of tRNAs. A 3'-hydroxy group is left at the tRNA terminus and a 5'-phosphoryl group is left at the trailer molecule.. Its function is as follows. Zinc phosphodiesterase, which displays some tRNA 3'-processing endonuclease activity. Probably involved in tRNA maturation, by removing a 3'-trailer from precursor tRNA. This is Ribonuclease Z from Bradyrhizobium sp. (strain ORS 278).